The chain runs to 76 residues: Acyl carrier protein (76 aa).

The 75-residue stretch at K2–N76 folds into the Carrier domain. At S37 the chain carries O-(pantetheine 4'-phosphoryl)serine.

This sequence belongs to the acyl carrier protein (ACP) family. Post-translationally, 4'-phosphopantetheine is transferred from CoA to a specific serine of apo-ACP by AcpS. This modification is essential for activity because fatty acids are bound in thioester linkage to the sulfhydryl of the prosthetic group.

It localises to the plastid. Its subcellular location is the chloroplast. It functions in the pathway lipid metabolism; fatty acid biosynthesis. Functionally, carrier of the growing fatty acid chain in fatty acid biosynthesis. The chain is Acyl carrier protein from Phaeodactylum tricornutum (strain CCAP 1055/1).